The chain runs to 150 residues: MKALILYKSIHHKNTEKIAKTIADELNADIYNIDKVSPDIIENYDLIGFGSGIYFGKHHKSIFKFLDKISKTNKKAFIFSTAGFPFLKSMFHKELRDKLKSKGFEILGEFCCKGYHTYGIFKLFGGLNKNHPNEDDIKKAKEFAKSILKN.

Residues 4-148 form the Flavodoxin-like domain; sequence LILYKSIHHK…KAKEFAKSIL (145 aa).

This is an uncharacterized protein from Methanocaldococcus jannaschii (strain ATCC 43067 / DSM 2661 / JAL-1 / JCM 10045 / NBRC 100440) (Methanococcus jannaschii).